Here is a 448-residue protein sequence, read N- to C-terminus: Tryptamine benzoyltransferase 2 (448 aa).

The tract at residues 1–20 (MEITSSAMLKPAPTPTPHPL) is disordered. Active-site proton acceptor residues include H155 and D386.

Belongs to the plant acyltransferase family.

Its function is as follows. Hydroxycinnamoyl transferase that catalyzes the transfer of an acyl from benzoyl-CoA to tryptamine, to produce benzoyl tryptamine. Serotonin and tyramine serve as acyl acceptors in vitro. Specific for benzoyl-CoA as acyl donor. Has no activity with p-coumaroyl-CoA, caffeoyl-CoA, or feruloyl-CoA as acyl donors. The polypeptide is Tryptamine benzoyltransferase 2 (Oryza sativa subsp. japonica (Rice)).